A 287-amino-acid polypeptide reads, in one-letter code: UPF0354 protein SSP1020 (287 aa).

Belongs to the UPF0354 family.

The sequence is that of UPF0354 protein SSP1020 from Staphylococcus saprophyticus subsp. saprophyticus (strain ATCC 15305 / DSM 20229 / NCIMB 8711 / NCTC 7292 / S-41).